Consider the following 321-residue polypeptide: tRNA uridine(34) hydroxylase (321 aa).

A Rhodanese domain is found at 135-233 (DDPDTLVIDT…YLEQVPEEES (99 aa)). Catalysis depends on Cys-193, which acts as the Cysteine persulfide intermediate. The segment at 301–321 (RQRQMDQLSSASSKKSDDFSL) is disordered.

It belongs to the TrhO family.

The enzyme catalyses uridine(34) in tRNA + AH2 + O2 = 5-hydroxyuridine(34) in tRNA + A + H2O. Its function is as follows. Catalyzes oxygen-dependent 5-hydroxyuridine (ho5U) modification at position 34 in tRNAs. In Parasynechococcus marenigrum (strain WH8102), this protein is tRNA uridine(34) hydroxylase.